A 1244-amino-acid chain; its full sequence is SWI/SNF chromatin remodeling complex subunit swsn-7 (1244 aa).

An ARID domain is found at 24–116; that stretch reads QRKMAEFYNS…YLSKFEQVET (93 aa). The span at 486 to 496 shows a compositional bias: polar residues; it reads FTQGSNQQQNP. Disordered regions lie at residues 486–534, 556–583, and 597–619; these read FTQG…GAAP, NREQ…ILAH, and DRRT…ESQL. The span at 497-508 shows a compositional bias: low complexity; sequence HHSQGGHQLGHS. Positions 556-566 are enriched in polar residues; that stretch reads NREQYSTQSSQ. Over residues 567-578 the composition is skewed to pro residues; it reads PHPPHTNVPPSP. Positions 610–619 are enriched in polar residues; sequence PSTNSGESQL. The RFX-type winged-helix DNA-binding region spans 623–697; it reads TEKWIRQNCV…IVAQGIRLIR (75 aa). The segment at 1134–1244 is disordered; sequence EEEQQKMLSE…TTPVRAGAGI (111 aa). Over residues 1142–1158 the composition is skewed to low complexity; that stretch reads SEVPSSASLSSMAGSSS. Polar residues-rich tracts occupy residues 1159–1186 and 1194–1212; these read QLPT…SNKP and LNFS…FTAG. The span at 1220–1231 shows a compositional bias: low complexity; that stretch reads PIQQHIPSQPSP.

In terms of assembly, component of the SWI/SNF-B (PBAF) chromatin remodeling complex.

It localises to the nucleus. Its function is as follows. Involved in transcriptional activation and repression of select genes by chromatin remodeling (alteration of DNA-nucleosome topology). Required for the stability of the SWI/SNF chromatin remodeling complex SWI/SNF-B (PBAF). Required for regulation of a stress response gene network, probably as part of the PBAF complex and perhaps acting in concert with histone demethylase jmjc-1. Binds to the ethanol and stress response elements (ESRE) in the promoter regions of hsp-16.1 and hsp-16.2, probably as part of the PBAF complex. This Caenorhabditis elegans protein is SWI/SNF chromatin remodeling complex subunit swsn-7.